We begin with the raw amino-acid sequence, 379 residues long: Dual-specificity RNA methyltransferase RlmN (379 aa).

E90 serves as the catalytic Proton acceptor. The Radical SAM core domain maps to 96–348 (EPNRGTLCVS…TTVRKTRGDD (253 aa)). A disulfide bridge connects residues C103 and C353. Positions 110, 114, and 117 each coordinate [4Fe-4S] cluster. Residues 179–180 (GE), S211, 233–235 (SLH), and N310 contribute to the S-adenosyl-L-methionine site. The active-site S-methylcysteine intermediate is C353.

Belongs to the radical SAM superfamily. RlmN family. Requires [4Fe-4S] cluster as cofactor.

Its subcellular location is the cytoplasm. The enzyme catalyses adenosine(2503) in 23S rRNA + 2 reduced [2Fe-2S]-[ferredoxin] + 2 S-adenosyl-L-methionine = 2-methyladenosine(2503) in 23S rRNA + 5'-deoxyadenosine + L-methionine + 2 oxidized [2Fe-2S]-[ferredoxin] + S-adenosyl-L-homocysteine. The catalysed reaction is adenosine(37) in tRNA + 2 reduced [2Fe-2S]-[ferredoxin] + 2 S-adenosyl-L-methionine = 2-methyladenosine(37) in tRNA + 5'-deoxyadenosine + L-methionine + 2 oxidized [2Fe-2S]-[ferredoxin] + S-adenosyl-L-homocysteine. In terms of biological role, specifically methylates position 2 of adenine 2503 in 23S rRNA and position 2 of adenine 37 in tRNAs. m2A2503 modification seems to play a crucial role in the proofreading step occurring at the peptidyl transferase center and thus would serve to optimize ribosomal fidelity. The polypeptide is Dual-specificity RNA methyltransferase RlmN (Nitrosomonas eutropha (strain DSM 101675 / C91 / Nm57)).